A 102-amino-acid polypeptide reads, in one-letter code: Urease subunit beta (102 aa).

The protein belongs to the urease beta subunit family. Heterotrimer of UreA (gamma), UreB (beta) and UreC (alpha) subunits. Three heterotrimers associate to form the active enzyme.

It is found in the cytoplasm. It carries out the reaction urea + 2 H2O + H(+) = hydrogencarbonate + 2 NH4(+). It functions in the pathway nitrogen metabolism; urea degradation; CO(2) and NH(3) from urea (urease route): step 1/1. The polypeptide is Urease subunit beta (Alteromonas mediterranea (strain DSM 17117 / CIP 110805 / LMG 28347 / Deep ecotype)).